We begin with the raw amino-acid sequence, 138 residues long: Nucleoside diphosphate kinase (138 aa).

K12, Y60, R88, T94, R105, and N115 together coordinate ATP. Catalysis depends on H118, which acts as the Pros-phosphohistidine intermediate.

Belongs to the NDK family. In terms of assembly, homotetramer. It depends on Mg(2+) as a cofactor.

The protein localises to the cytoplasm. The enzyme catalyses a 2'-deoxyribonucleoside 5'-diphosphate + ATP = a 2'-deoxyribonucleoside 5'-triphosphate + ADP. It catalyses the reaction a ribonucleoside 5'-diphosphate + ATP = a ribonucleoside 5'-triphosphate + ADP. Major role in the synthesis of nucleoside triphosphates other than ATP. The ATP gamma phosphate is transferred to the NDP beta phosphate via a ping-pong mechanism, using a phosphorylated active-site intermediate. The polypeptide is Nucleoside diphosphate kinase (Cutibacterium acnes (strain DSM 16379 / KPA171202) (Propionibacterium acnes)).